A 582-amino-acid polypeptide reads, in one-letter code: Zinc finger protein somi-1 (582 aa).

2 disordered regions span residues 179 to 251 (LRPE…NNTD) and 352 to 377 (SAEP…KKEQ). Residues 188 to 226 (TQKSTNGVHRSTSNSSAETLRNNSVSAATVSPSDDNSLN) show a composition bias toward polar residues. Low complexity predominate over residues 227–244 (SPALTSSGSAGSGTPPLG). Over residues 352–368 (SAEPMKRHRVEAHEKQS) the composition is skewed to basic and acidic residues. A C2H2-type; Degenerate zinc finger spans residues 454-477 (YICEDCDFVTVYKGNMKRHLNTCH). A disordered region spans residues 513–582 (AHKANSSRGR…PPPPPPPMLL (70 aa)). The span at 551-570 (LLESLASSSSSMGGYSNGNN) shows a compositional bias: low complexity. A compositionally biased stretch (pro residues) spans 572 to 582 (QPPPPPPPMLL).

In terms of assembly, may interact with swsn-9; the interaction promotes hypodermal differentiation. As to expression, expressed in hypodermal seam cells, the somatic gonad and vulval precursor cells, body wall muscle and head neurons.

Its subcellular location is the nucleus. DNA-binding protein which binds to the promoters of let-60, lin-14 and lin-28, possibly to regulate genes involved in hypodermal and vulval development. Together with miRNAs mir-84 and let-7 may direct terminal differentiation of the seam cells, exit from the molting cycle, and vulva formation. Does not regulate the expression of mir-84. May promote hypodermal differentiation in association with swsn-9, a component of SWI/SNF chromatin remodeling complexes. In Caenorhabditis elegans, this protein is Zinc finger protein somi-1.